The sequence spans 256 residues: Imidazole glycerol phosphate synthase subunit HisF (256 aa).

Catalysis depends on residues Asp-11 and Asp-130.

It belongs to the HisA/HisF family. As to quaternary structure, heterodimer of HisH and HisF.

It is found in the cytoplasm. The catalysed reaction is 5-[(5-phospho-1-deoxy-D-ribulos-1-ylimino)methylamino]-1-(5-phospho-beta-D-ribosyl)imidazole-4-carboxamide + L-glutamine = D-erythro-1-(imidazol-4-yl)glycerol 3-phosphate + 5-amino-1-(5-phospho-beta-D-ribosyl)imidazole-4-carboxamide + L-glutamate + H(+). The protein operates within amino-acid biosynthesis; L-histidine biosynthesis; L-histidine from 5-phospho-alpha-D-ribose 1-diphosphate: step 5/9. Its function is as follows. IGPS catalyzes the conversion of PRFAR and glutamine to IGP, AICAR and glutamate. The HisF subunit catalyzes the cyclization activity that produces IGP and AICAR from PRFAR using the ammonia provided by the HisH subunit. In Prochlorococcus marinus (strain MIT 9312), this protein is Imidazole glycerol phosphate synthase subunit HisF.